We begin with the raw amino-acid sequence, 339 residues long: MRPLLEKIARGLELSLEEAYNAALAILKMEAGEAETAALLMGLRVRGERAFEVAGFAKALRETCLRIPVNDPYVIDTAGTGGDGLRTMNVSTISALLAAYLGVKVLKHGNRSVSSSSGSADFLEALGFNISVKPETALLMLNNHRFSFAFAPMYHPAMKNVMPVRRRLGIRTIFNLVGPLANPGLVRRQVLGVAEAGIMGVMAEAAGLIGYDHLLLVHGEPGIDEVSVFGRTMIYEVKGNSIDKYVIEPPELGLRIHELRDVVVSNPMESIEKAKRGLMGVDEAALDFIAANTAMALYVAGKVKDPRDGVEAVKQIAGNSNDFWSYVNNVAAVSRRDSA.

5-phospho-alpha-D-ribose 1-diphosphate-binding positions include glycine 79, 82–83 (GD), threonine 87, 89–92 (NVST), 107–115 (KHGNRSVSS), and serine 119. Glycine 79 is a binding site for anthranilate. Residue serine 91 coordinates Mg(2+). Anthranilate is bound at residue asparagine 110. Arginine 165 is an anthranilate binding site. The Mg(2+) site is built by aspartate 224 and glutamate 225.

It belongs to the anthranilate phosphoribosyltransferase family. Homodimer. Mg(2+) is required as a cofactor.

The enzyme catalyses N-(5-phospho-beta-D-ribosyl)anthranilate + diphosphate = 5-phospho-alpha-D-ribose 1-diphosphate + anthranilate. The protein operates within amino-acid biosynthesis; L-tryptophan biosynthesis; L-tryptophan from chorismate: step 2/5. In terms of biological role, catalyzes the transfer of the phosphoribosyl group of 5-phosphorylribose-1-pyrophosphate (PRPP) to anthranilate to yield N-(5'-phosphoribosyl)-anthranilate (PRA). The chain is Anthranilate phosphoribosyltransferase from Caldivirga maquilingensis (strain ATCC 700844 / DSM 13496 / JCM 10307 / IC-167).